A 450-amino-acid chain; its full sequence is MPLRPHIGLGFPAHAYQKRHVEPHDRSTGYQPKVRITDRYRIIGFISSGTYGRVYKAVGRNGKPVGEFAIKKFKPDKEGEQISYTGISQSAIREMSLCSELHHINVIRLCEIVLEDKCIFMVFEYAEHDLLQIIHHHTQQPRHPIPPATIKSIMFQLLNGCQYLHINWVLHRDLKPANIMVTSSGEVKIGDLGLARRFDKPLHSLFSGDKVVVTIWYRAPELILGSYHYTPAIDMWAVGCIFAELLSLRPIFKGEEAKMDSKKTVPFRRNQMQKIIEIMGVPTKDKWPLLSTMPEYNQLNTLANSMASSHHNHHSHHHPHHHHGHYGSRNPPPPGGSNLEKWYYSTINHTSAPGGTPPLASLGSEGYKLLAGLLEYDPSKRLTAAQALQSPFFSTGDRVSANCFEGCKNEYPCRRVSQDDNDIRTSSLPGTKRSGLPDDSLIRPAKRQKE.

The region spanning 40–393 is the Protein kinase domain; that stretch reads YRIIGFISSG…AAQALQSPFF (354 aa). Residues 46–54 and lysine 71 each bind ATP; that span reads ISSGTYGRV. Aspartate 173 serves as the catalytic Proton acceptor. Disordered regions lie at residues 307–341 and 418–450; these read ASSH…NLEK and QDDN…RQKE. The span at 310 to 326 shows a compositional bias: basic residues; that stretch reads HHNHHSHHHPHHHHGHY.

This sequence belongs to the protein kinase superfamily. CMGC Ser/Thr protein kinase family. CDC2/CDKX subfamily. Component of the SRB8-11 complex, a regulatory module of the Mediator complex. Interacts with SSN8/FCC1. The cofactor is Mg(2+).

It is found in the nucleus. It carries out the reaction L-seryl-[protein] + ATP = O-phospho-L-seryl-[protein] + ADP + H(+). It catalyses the reaction L-threonyl-[protein] + ATP = O-phospho-L-threonyl-[protein] + ADP + H(+). The enzyme catalyses [DNA-directed RNA polymerase] + ATP = phospho-[DNA-directed RNA polymerase] + ADP + H(+). Its function is as follows. Component of the SRB8-11 complex. The SRB8-11 complex is a regulatory module of the Mediator complex which is itself involved in regulation of basal and activated RNA polymerase II-dependent transcription. The SRB8-11 complex may be involved in the transcriptional repression of a subset of genes regulated by Mediator. It may inhibit the association of the Mediator complex with RNA polymerase II to form the holoenzyme complex. The SRB8-11 complex phosphorylates the C-terminal domain (CTD) of the largest subunit of RNA polymerase II. Required for normal growth and secondary metabolism. This is Serine/threonine-protein kinase SSN3 (SSN3) from Gibberella moniliformis (Maize ear and stalk rot fungus).